A 187-amino-acid polypeptide reads, in one-letter code: MNLQHHFLIAMPALQDPLFRRSVVYICEYNNEGAMGLIINKPLENLQVEGVLQKLKITPEPRDPAIRLDKPVFLGGPLAEDRGFILHTPPDAFSSSIRISDNTVITTSRDVLETLGTAEQPDDVLVALGYSSWEKGQLEEEILENAWLTAPADLNILFRTPIADRWREAAKLIGIDIHTMPGEAGHA.

It belongs to the UPF0301 (AlgH) family.

The protein is UPF0301 protein ESA_00394 of Cronobacter sakazakii (strain ATCC BAA-894) (Enterobacter sakazakii).